The following is a 239-amino-acid chain: 3,4-dihydroxyphthalate decarboxylase (239 aa).

E84 serves as the catalytic Proton donor/acceptor. E84, H103, H105, and H171 together coordinate a divalent metal cation.

It belongs to the aldolase class II family. The cofactor is a divalent metal cation.

It carries out the reaction 3,4-dihydroxyphthalate + H(+) = 3,4-dihydroxybenzoate + CO2. The protein operates within xenobiotic degradation; phthalate degradation. In terms of biological role, catalyzes the decarboxylation of 3,4-dihydroxyphthalate to protocatechuate (3,4-dihydroxybenzoate) during phthalate metabolism. This Terrabacter sp. (strain DBF63) protein is 3,4-dihydroxyphthalate decarboxylase.